The primary structure comprises 882 residues: MAKSNEESSNLNVMNKPPLKKTKTLPSLNLRVSVTPPNPNDNNGIGGTSTTKTDFSEQQWNYPSFLGIGSTSRKRRQPPPPPSKPPVNLIPPHPRPLSVNDHNKTTSSLLPQPSSSSITKQQQQHSTSSPIFYLLVICCIILVPYSAYLQYKLAKLKDMKLQLCGQIDFCSRNGKTSIQEEVDDDDNADSRTIALYIVLFTLILPFVLYKYLDYLPQIINFLRRTESNKEDVPLKKRVAYMVDVFFSIYPYAKLLALLCATLFLIAFGGLALYAVTGGSMAEALWHSWTYVADAGNHAETEGTGQRIVSVSISAGGMLIFAMMLGLVSDAISEKVDSLRKGKSEVIERNHVLILGWSDKLGSLLKQLAIANKSVGGGVIVVLAEKEKEEMEMDIAKLEFDFMGTSVICRSGSPLILADLKKVSVSKARAIIVLAADENADQSDARALRVVLSLAGVKEGLRGHVVVEMSDLDNEPLVKLVGGELIETVVAHDVIGRLMIQCALQPGLAQIWEDILGFENAEFYIKRWPELDDLLFKDILISFPDAIPCGVKVAADGGKIVINPDDNYVLRDGDEVLVIAEDDDTYAPGPLPEVRKGYFPRIRDPPKYPEKILFCGWRRDIDDMIMVLEAFLAPGSELWMFNEVPEKERERKLAAGELDVFGLENIKLVHREGNAVIRRHLESLPLETFDSILILADESVEDSVAHSDSRSLATLLLIRDIQSRRLPYRDTKSTSLRLSGFSHNSWIREMQQASDKSIIISEILDSRTRNLVSVSRISDYVLSNELVSMALAMVAEDKQINRVLEELFAEEGNEMCIKPAEFYLFDQEELCFYDIMIRGRTRKEIVIGYRLANQERAIINPSEKSVPRKWSLDDVFVVLASGE.

The segment at 1 to 122 (MAKSNEESSN…PSSSSITKQQ (122 aa)) is disordered. Polar residues predominate over residues 48–62 (TSTTKTDFSEQQWNY). The segment covering 78-95 (PPPPPSKPPVNLIPPHPR) has biased composition (pro residues). A compositionally biased stretch (low complexity) spans 107–117 (SSLLPQPSSSS). 4 consecutive transmembrane segments (helical) span residues 129–149 (SPIF…SAYL), 192–212 (TIAL…YKYL), 255–275 (LALL…LYAV), and 307–327 (IVSV…LGLV). 2 consecutive RCK N-terminal domains span residues 348 to 489 (RNHV…ETVV) and 608 to 757 (PEKI…DKSI). A coiled-coil region spans residues 378-403 (VIVVLAEKEKEEMEMDIAKLEFDFMG).

The protein belongs to the castor/pollux (TC 1.A.1.23) family. Interacts (via c-terminus) with CNGC15A, CNGC15B and CNGC15C (via N-terminus). The Nod factor has no effect on these interactions, implying that the complex is maintained after activation. Mainly expressed in roots and nodules. Also detected in pods, flowers, leaves, and stems.

Its subcellular location is the nucleus membrane. Functionally, required for early signal transduction events leading to endosymbiosis. Acts early in a signal transduction chain leading from the perception of Nod factor to the activation of calcium spiking. Also involved in mycorrhizal symbiosis. May be involved in the regulation of the calcium channel responsible for calcium spiking by mobilizing another cation, and thereby altering the membrane potential. The sequence is that of Ion channel DMI1 from Medicago truncatula (Barrel medic).